Reading from the N-terminus, the 66-residue chain is MASKMKTRKSAKKRYSFTVNGKVKYKKQNLRHILTKKSSKRKRNLRKSGNLSCFEVKRIKTLLPYG.

Belongs to the bacterial ribosomal protein bL35 family.

This chain is Large ribosomal subunit protein bL35, found in Borrelia garinii subsp. bavariensis (strain ATCC BAA-2496 / DSM 23469 / PBi) (Borreliella bavariensis).